The primary structure comprises 716 residues: Epidermal growth factor receptor kinase substrate 8-like protein 1 (716 aa).

Positions 35–164 (QYHVNHLVTF…LQNYRSGRGE (130 aa)) constitute a PTB domain. Disordered regions lie at residues 175 to 194 (EELR…QRRP), 203 to 249 (VEPS…GPEL), 404 to 472 (PGVE…ETES), 528 to 582 (YNIL…SLDP), and 600 to 628 (SRLA…PRSE). Residue S182 is modified to Phosphoserine. T187 is subject to Phosphothreonine. The span at 435–446 (PWEDPVEKQLQH) shows a compositional bias: basic and acidic residues. A compositionally biased stretch (polar residues) spans 453-464 (QSAPQVAVNGQQ). The 60-residue stretch at 477 to 536 (KARKWVLCNYDFQARNGSELSVKHRDVLEVLDDRRKWWKVRDHQGQEGYVPYNILTPHPG) folds into the SH3 domain. Pro residues predominate over residues 553–563 (TPPPPPAPAPA). Residues 682–713 (VQRALLEDREKVSELEAVMEKQKKKVEGETKT) are a coiled coil.

Belongs to the EPS8 family. In terms of assembly, interacts with ABI1. Part of a complex that contains SOS1, ABI1 and EPS8L2. Associates with F-actin. Detected in placenta, skin, mammary gland, bone marrow and stomach.

It localises to the cytoplasm. Stimulates guanine exchange activity of SOS1. May play a role in membrane ruffling and remodeling of the actin cytoskeleton. This Mus musculus (Mouse) protein is Epidermal growth factor receptor kinase substrate 8-like protein 1 (Eps8l1).